A 255-amino-acid chain; its full sequence is Ribonuclease HII (255 aa).

The 186-residue stretch at 70 to 255 folds into the RNase H type-2 domain; the sequence is EYIAGVDEVG…FEPVKKILLK (186 aa). Residues D76, E77, and D168 each contribute to the a divalent metal cation site.

This sequence belongs to the RNase HII family. It depends on Mn(2+) as a cofactor. The cofactor is Mg(2+).

The protein resides in the cytoplasm. It carries out the reaction Endonucleolytic cleavage to 5'-phosphomonoester.. Its function is as follows. Endonuclease that specifically degrades the RNA of RNA-DNA hybrids. This chain is Ribonuclease HII, found in Ligilactobacillus salivarius (strain UCC118) (Lactobacillus salivarius).